We begin with the raw amino-acid sequence, 201 residues long: E3 ubiquitin-protein ligase LAP (201 aa).

Residues 1–92 (MSTIVDMVDV…RDCHDSLLVN (92 aa)) lie on the Cytoplasmic side of the membrane. An RING-CH-type zinc finger spans residues 9 to 69 (DVSLVDKCCW…AICETPYNVK (61 aa)). Zn(2+)-binding residues include cysteine 17, cysteine 20, cysteine 31, cysteine 33, histidine 41, cysteine 44, cysteine 59, and cysteine 62. Residues 93-113 (LPLCLIVGGISTYTLVSVEII) form a helical membrane-spanning segment. The Lumenal portion of the chain corresponds to 114-123 (KLMESEETSE). The helical transmembrane segment at 124-144 (LTKVFLVTSFLGPFIVTVLSA) threads the bilayer. At 145-201 (LRTCIDCRTYFLTTRKRNTIHTLQELEDDDDDDDDDDDDDDEEYADAVEEIIIGPSN) the chain is on the cytoplasmic side. The interval 168 to 188 (QELEDDDDDDDDDDDDDDEEY) is disordered. Positions 169 to 188 (ELEDDDDDDDDDDDDDDEEY) are enriched in acidic residues.

It belongs to the poxviridae LAP protein family.

It is found in the host membrane. The protein resides in the host Golgi apparatus. Its subcellular location is the host trans-Golgi network membrane. It localises to the host early endosome membrane. The catalysed reaction is S-ubiquitinyl-[E2 ubiquitin-conjugating enzyme]-L-cysteine + [acceptor protein]-L-lysine = [E2 ubiquitin-conjugating enzyme]-L-cysteine + N(6)-ubiquitinyl-[acceptor protein]-L-lysine.. In terms of biological role, E3 ubiquitin-protein ligase which promotes ubiquitination and subsequent degradation of host MHC-I and CD4 molecules, presumably to prevent lysis of infected cells by cytotoxic T-lymphocytes and NK cell. Binds target molecules through transmembrane interaction. The result of this ubiquitination is the enhancement of the endocytosis of the target chain and the delivery to the lysosome, where it is proteolytically destroyed. The chain is E3 ubiquitin-protein ligase LAP from Oryctolagus cuniculus (Rabbit).